The sequence spans 612 residues: Elongation factor 4 (612 aa).

The 183-residue stretch at serine 12 to threonine 194 folds into the tr-type G domain. Residues aspartate 24–threonine 29 and asparagine 141–aspartate 144 each bind GTP.

The protein belongs to the TRAFAC class translation factor GTPase superfamily. Classic translation factor GTPase family. LepA subfamily.

It localises to the cell membrane. It catalyses the reaction GTP + H2O = GDP + phosphate + H(+). Required for accurate and efficient protein synthesis under certain stress conditions. May act as a fidelity factor of the translation reaction, by catalyzing a one-codon backward translocation of tRNAs on improperly translocated ribosomes. Back-translocation proceeds from a post-translocation (POST) complex to a pre-translocation (PRE) complex, thus giving elongation factor G a second chance to translocate the tRNAs correctly. Binds to ribosomes in a GTP-dependent manner. This Bacillus subtilis (strain 168) protein is Elongation factor 4.